A 163-amino-acid polypeptide reads, in one-letter code: uncharacterized protein (163 aa).

Belongs to the IMPDH/GMPR family.

This is an uncharacterized protein from Haemophilus influenzae (strain ATCC 51907 / DSM 11121 / KW20 / Rd).